The primary structure comprises 122 residues: Large ribosomal subunit protein uL14c (122 aa).

This sequence belongs to the universal ribosomal protein uL14 family. As to quaternary structure, part of the 50S ribosomal subunit.

The protein resides in the plastid. It localises to the chloroplast. Its function is as follows. Binds to 23S rRNA. In Populus trichocarpa (Western balsam poplar), this protein is Large ribosomal subunit protein uL14c.